Here is a 466-residue protein sequence, read N- to C-terminus: Signal recognition particle 54 kDa protein (466 aa).

GTP contacts are provided by residues 104–111 (GLQGSGKT), 184–188 (DTAGR), and 242–245 (TKLD). The segment at 444-466 (MQQGGGGGGGGGGGLGGMGPFGD) is disordered. Positions 446–466 (QGGGGGGGGGGGLGGMGPFGD) are enriched in gly residues.

It belongs to the GTP-binding SRP family. SRP54 subfamily. In terms of assembly, part of the signal recognition particle protein translocation system, which is composed of SRP and FtsY. Archaeal SRP consists of a 7S RNA molecule of 300 nucleotides and two protein subunits: SRP54 and SRP19.

Its subcellular location is the cytoplasm. It carries out the reaction GTP + H2O = GDP + phosphate + H(+). Functionally, involved in targeting and insertion of nascent membrane proteins into the cytoplasmic membrane. Binds to the hydrophobic signal sequence of the ribosome-nascent chain (RNC) as it emerges from the ribosomes. The SRP-RNC complex is then targeted to the cytoplasmic membrane where it interacts with the SRP receptor FtsY. The sequence is that of Signal recognition particle 54 kDa protein from Natronomonas pharaonis (strain ATCC 35678 / DSM 2160 / CIP 103997 / JCM 8858 / NBRC 14720 / NCIMB 2260 / Gabara) (Halobacterium pharaonis).